Here is a 412-residue protein sequence, read N- to C-terminus: Probable inactive allantoicase (412 aa).

It belongs to the allantoicase family.

Its function is as follows. The function of this enzyme is unclear as allantoicase activity is not known to exist in mammals. This Bos taurus (Bovine) protein is Probable inactive allantoicase (ALLC).